The chain runs to 488 residues: Capsid protein (488 aa).

Residues 80-93 (ISEDESDSGEEPEF) are compositionally biased toward acidic residues. The disordered stretch occupies residues 80–143 (ISEDESDSGE…QPKTIPGQKQ (64 aa)). The span at 94-109 (EQVRMDRTGGTEIPKE) shows a compositional bias: basic and acidic residues. The short motif at 121–124 (RKRK) is the Nuclear localization signal element. Polar residues predominate over residues 134 to 143 (QPKTIPGQKQ). The segment at 410 to 427 (CRCWICNIEGHYANECPN) adopts a CCHC-type zinc-finger fold. Positions 463–488 (YKEEEEETSTEESDDESSTSEDSDSD) are disordered. The segment covering 464–488 (KEEEEETSTEESDDESSTSEDSDSD) has biased composition (acidic residues).

The protein belongs to the caulimoviridae capsid protein family. In terms of assembly, interacts (via nuclear localization signal) with host importin alpha.

The protein resides in the virion. The protein localises to the host nucleus. Functionally, self assembles to form an icosahedral capsid, about 50 nm in diameter, nm, composed of 420 subunits of the viral capsid protein. The capsid encapsulates the genomic dsDNA. Following virus entry into host cell, provides nuclear import of the viral genome. Virus particles do not enter the nucleus, but dock at the nuclear membrane through the interaction with host importins. The protein is Capsid protein of Arabidopsis thaliana (Mouse-ear cress).